The following is a 506-amino-acid chain: Deoxyguanosinetriphosphate triphosphohydrolase (506 aa).

An HD domain is found at arginine 66 to cysteine 274.

The protein belongs to the dGTPase family. Type 1 subfamily. As to quaternary structure, homotetramer. Requires Mg(2+) as cofactor.

It catalyses the reaction dGTP + H2O = 2'-deoxyguanosine + triphosphate + H(+). DGTPase preferentially hydrolyzes dGTP over the other canonical NTPs. The sequence is that of Deoxyguanosinetriphosphate triphosphohydrolase from Yersinia pseudotuberculosis serotype O:3 (strain YPIII).